We begin with the raw amino-acid sequence, 842 residues long: Protein P (842 aa).

The segment at 1 to 177 is terminal protein domain (TP); it reads MPLSYQHFRK…FCGSPYSWEQ (177 aa). A spacer region spans residues 178 to 346; the sequence is ELQHGRLVFQ…YCLTHIVNLL (169 aa). Residues 218 to 274 are disordered; sequence LKQSRLGLQPQQGSLARGKSGRSGSIRARVPPTTRRSFGVEPSGSGHIDNRASSTSS. Positions 347-690 are polymerase/reverse transcriptase domain (RT); the sequence is EDWGPCTEHG…YLHLYPVARR (344 aa). Residues 357–600 enclose the Reverse transcriptase domain; the sequence is EHNIRIPRTP…YSLNFMGYVI (244 aa). Residues Asp429, Asp551, and Asp552 each coordinate Mg(2+).

The protein belongs to the hepadnaviridae P protein family.

The catalysed reaction is DNA(n) + a 2'-deoxyribonucleoside 5'-triphosphate = DNA(n+1) + diphosphate. It carries out the reaction Endonucleolytic cleavage to 5'-phosphomonoester.. Activated by host HSP70 and HSP40 in vitro to be able to bind the epsilon loop of the pgRNA. Because deletion of the RNase H region renders the protein partly chaperone-independent, the chaperones may be needed indirectly to relieve occlusion of the RNA-binding site by this domain. Inhibited by several reverse-transcriptase inhibitors: Lamivudine, Adefovir and Entecavir. In terms of biological role, multifunctional enzyme that converts the viral RNA genome into dsDNA in viral cytoplasmic capsids. This enzyme displays a DNA polymerase activity that can copy either DNA or RNA templates, and a ribonuclease H (RNase H) activity that cleaves the RNA strand of RNA-DNA heteroduplexes in a partially processive 3'- to 5'-endonucleasic mode. Neo-synthesized pregenomic RNA (pgRNA) are encapsidated together with the P protein, and reverse-transcribed inside the nucleocapsid. Initiation of reverse-transcription occurs first by binding the epsilon loop on the pgRNA genome, and is initiated by protein priming, thereby the 5'-end of (-)DNA is covalently linked to P protein. Partial (+)DNA is synthesized from the (-)DNA template and generates the relaxed circular DNA (RC-DNA) genome. After budding and infection, the RC-DNA migrates in the nucleus, and is converted into a plasmid-like covalently closed circular DNA (cccDNA). The activity of P protein does not seem to be necessary for cccDNA generation, and is presumably released from (+)DNA by host nuclear DNA repair machinery. The protein is Protein P of Hepatitis B virus genotype C subtype adr (isolate Korea/Kim/1989) (HBV-C).